The chain runs to 225 residues: Perlwapin-like protein (225 aa).

An N-terminal signal peptide occupies residues 1–19 (MNHLWLFIVTVSCIYLVYG). 4 cysteine pairs are disulfide-bonded: Cys-27-Cys-57, Cys-36-Cys-61, Cys-43-Cys-56, and Cys-49-Cys-65. The WAP 1; atypical domain maps to 27–68 (CKVKFMGTACPLGRLVCEEDGDCLGVNQVCCYDGCGTTCHNK). N-linked (GlcNAc...) asparagine glycosylation is present at Asn-67. One can recognise a WAP 2 domain in the interval 117-169 (IIPSPELLCPVVTVRYAFCRFSTYTPCHTSNDCAVPGMKCCPDVCGKRCKFPI). 4 disulfides stabilise this stretch: Cys-125–Cys-157, Cys-135–Cys-161, Cys-143–Cys-156, and Cys-149–Cys-165. N-linked (GlcNAc...) asparagine glycosylation is present at Asn-170. The tract at residues 176 to 225 (QFQQTPLKPTVPLPQYQQTPLQPTVPSSQPPLQPTVPSPQSYNYKGACST) is disordered. Over residues 188-201 (LPQYQQTPLQPTVP) the composition is skewed to low complexity. Residues 203–212 (SQPPLQPTVP) show a composition bias toward pro residues. Polar residues predominate over residues 213–225 (SPQSYNYKGACST).

Component of the acid-soluble organic matrix of calcified layers of the shell (at protein level).

The protein localises to the secreted. The chain is Perlwapin-like protein from Lottia gigantea (Giant owl limpet).